We begin with the raw amino-acid sequence, 355 residues long: Tryptophan--tRNA ligase (355 aa).

ATP-binding positions include 13-15 and 21-22; these read QPT and GN. The 'HIGH' region motif lies at 14 to 22; it reads PTGNLHLGN. Asp-137 contributes to the L-tryptophan binding site. ATP-binding positions include 149–151, Ile-208, and 217–221; these read GED and KMSKS. The 'KMSKS' region signature appears at 217–221; the sequence is KMSKS.

The protein belongs to the class-I aminoacyl-tRNA synthetase family. As to quaternary structure, homodimer.

Its subcellular location is the cytoplasm. It catalyses the reaction tRNA(Trp) + L-tryptophan + ATP = L-tryptophyl-tRNA(Trp) + AMP + diphosphate + H(+). Its function is as follows. Catalyzes the attachment of tryptophan to tRNA(Trp). This Mesorhizobium japonicum (strain LMG 29417 / CECT 9101 / MAFF 303099) (Mesorhizobium loti (strain MAFF 303099)) protein is Tryptophan--tRNA ligase.